Here is a 673-residue protein sequence, read N- to C-terminus: Ion-translocating oxidoreductase complex subunit C (673 aa).

4Fe-4S ferredoxin-type domains follow at residues 368 to 397 and 407 to 436; these read MGAPQEEKSCIRCSACADACPADLLPQQLY and KATAHHIADCIECGACAWVCPSNIPLVQYF. [4Fe-4S] cluster is bound by residues C377, C380, C383, C387, C416, C419, C422, and C426. 2 disordered regions span residues 534 to 553 and 563 to 653; these read QARAKQAAHPVADSAISGGA and IARA…AAVA.

This sequence belongs to the 4Fe4S bacterial-type ferredoxin family. RnfC subfamily. The complex is composed of six subunits: RsxA, RsxB, RsxC, RsxD, RsxE and RsxG. It depends on [4Fe-4S] cluster as a cofactor.

Its subcellular location is the cell inner membrane. Functionally, part of a membrane-bound complex that couples electron transfer with translocation of ions across the membrane. Required to maintain the reduced state of SoxR. This is Ion-translocating oxidoreductase complex subunit C from Salmonella gallinarum (strain 287/91 / NCTC 13346).